A 221-amino-acid polypeptide reads, in one-letter code: Cytidylate kinase (221 aa).

Position 11–19 (11–19 (GPSGVGKST)) interacts with ATP.

It belongs to the cytidylate kinase family. Type 1 subfamily.

It localises to the cytoplasm. The enzyme catalyses CMP + ATP = CDP + ADP. The catalysed reaction is dCMP + ATP = dCDP + ADP. In Mycoplasmopsis pulmonis (strain UAB CTIP) (Mycoplasma pulmonis), this protein is Cytidylate kinase.